The following is a 352-amino-acid chain: N-acetyl-gamma-glutamyl-phosphate reductase (352 aa).

Cys155 is an active-site residue.

Belongs to the NAGSA dehydrogenase family. Type 1 subfamily.

The protein resides in the cytoplasm. It carries out the reaction N-acetyl-L-glutamate 5-semialdehyde + phosphate + NADP(+) = N-acetyl-L-glutamyl 5-phosphate + NADPH + H(+). Its pathway is amino-acid biosynthesis; L-arginine biosynthesis; N(2)-acetyl-L-ornithine from L-glutamate: step 3/4. Its function is as follows. Catalyzes the NADPH-dependent reduction of N-acetyl-5-glutamyl phosphate to yield N-acetyl-L-glutamate 5-semialdehyde. This is N-acetyl-gamma-glutamyl-phosphate reductase from Acaryochloris marina (strain MBIC 11017).